A 265-amino-acid polypeptide reads, in one-letter code: Lipopolysaccharide core heptose(I) kinase WaaP (265 aa).

D162 is a catalytic residue.

This sequence belongs to the protein kinase superfamily. KdkA/RfaP family. It depends on Mg(2+) as a cofactor.

It carries out the reaction an L-alpha-D-Hep-(1-&gt;3)-L-alpha-D-Hep-(1-&gt;5)-[alpha-Kdo-(2-&gt;4)]-alpha-Kdo-(2-&gt;6)-lipid A + ATP = an L-alpha-D-Hep-(1-&gt;3)-4-O-phospho-L-alpha-D-Hep-(1-&gt;5)-[alpha-Kdo-(2-&gt;4)]-alpha-Kdo-(2-&gt;6)-lipid A + ADP + H(+). The enzyme catalyses L-alpha-D-Hep-(1-&gt;3)-L-alpha-D-Hep-(1-&gt;5)-[alpha-Kdo-(2-&gt;4)]-alpha-Kdo-(2-&gt;6)-lipid A (E. coli) + ATP = L-alpha-D-Hep-(1-&gt;3)-4-O-phospho-L-alpha-D-Hep-(1-&gt;5)-[alpha-Kdo-(2-&gt;4)]-alpha-Kdo-(2-&gt;6)-lipid A (E. coli) + ADP + H(+). Its pathway is bacterial outer membrane biogenesis; LPS core biosynthesis. Its function is as follows. Kinase involved in the biosynthesis of the core oligosaccharide region of lipopolysaccharide (LPS). Catalyzes the phosphorylation of heptose I (HepI), the first heptose added to the Kdo2-lipid A module. This chain is Lipopolysaccharide core heptose(I) kinase WaaP, found in Escherichia coli (strain K12).